A 691-amino-acid chain; its full sequence is Tumor necrosis factor alpha-induced protein 2 (691 aa).

Residues Gln9 to Leu111 are disordered. The span at Pro12–Arg31 shows a compositional bias: polar residues. The span at Thr33–Ala45 shows a compositional bias: low complexity. Over residues Gln91–Leu107 the composition is skewed to basic and acidic residues.

It belongs to the SEC6 family.

In terms of biological role, may play a role as a mediator of inflammation and angiogenesis. The protein is Tumor necrosis factor alpha-induced protein 2 (Tnfaip2) of Mus musculus (Mouse).